We begin with the raw amino-acid sequence, 2170 residues long: Supervillin (2170 aa).

Positions 1–167 are interaction with MYLK; the sequence is MKRKERIARR…NSRHSRTESG (167 aa). Disordered stretches follow at residues 37-94, 107-327, 413-444, 511-546, and 567-643; these read EDTP…HSLE, RRRQ…QSES, PEPL…NKDL, DYTG…GAEA, and RASK…EDEE. Phosphoserine is present on Ser-50. Polar residues-rich tracts occupy residues 63-73 and 81-90; these read PGSSLEKQTPS and GIHSSGSMDT. The segment covering 134–166 has biased composition (basic and acidic residues); sequence SRKDPDVTERRGKSDKQEEQSKDANSRHSRTES. The segment covering 167–195 has biased composition (polar residues); that stretch reads GPRTSLVASQDCTPLGSNMSDQEQLLNVE. Ser-220, Ser-227, and Ser-241 each carry phosphoserine. Over residues 230 to 241 the composition is skewed to polar residues; sequence QIPSSPLQQPAS. 2 stretches are compositionally biased toward basic and acidic residues: residues 261 to 272 and 286 to 297; these read PTHEWFLQRDSE and KVREKLVKEESA. The segment covering 298-313 has biased composition (polar residues); sequence RSSPELTSESLTQRRQ. Residues Ser-299 and Ser-300 each carry the phosphoserine modification. Over residues 427–444 the composition is skewed to basic and acidic residues; sequence EDDRLVRGHKDPSGNKDL. Composition is skewed to basic and acidic residues over residues 570–582 and 606–615; these read KKPE…ERSA and ESRKTSERFR. Phosphoserine occurs at positions 632, 666, 728, and 761. The interval 743–771 is disordered; the sequence is ASAHQKALARDQANEGRESAEPGEPDSST. Positions 750–762 are enriched in basic and acidic residues; that stretch reads LARDQANEGRESA. A Phosphotyrosine modification is found at Tyr-809. Thr-811 carries the phosphothreonine modification. 3 positions are modified to phosphoserine: Ser-857, Ser-877, and Ser-881. The interval 887–909 is disordered; that stretch reads AWRPLVEHSGSKGMPGESGKTES. A phosphoserine mark is found at Ser-960, Ser-1011, Ser-1031, and Ser-1077. The segment at 1117 to 1137 is disordered; it reads HTQEVEQSLKKKRVTESRESQ. The span at 1119 to 1137 shows a compositional bias: basic and acidic residues; that stretch reads QEVEQSLKKKRVTESRESQ. Position 1159 is an omega-N-methylarginine (Arg-1159). Ser-1181 and Ser-1184 each carry phosphoserine. Position 1186 is a phosphothreonine (Thr-1186). Ser-1190, Ser-1278, and Ser-1361 each carry phosphoserine. Residues 1375 to 1643 form an interaction with NEB region; sequence SNINLRSVNL…KFLDWTELKR (269 aa). Gelsolin-like repeat units lie at residues 1397-1496, 1516-1638, 1708-1818, 1837-1938, and 1971-2078; these read KKLM…LGGQ, IETN…FLDW, VSVD…FQGG, WRLY…LGRR, and ATEF…FPSW. Residues 2107-2170 form the HP domain; sequence KLCKTIYPLA…VNLKKSKGLF (64 aa).

Belongs to the villin/gelsolin family. As to quaternary structure, associates with F-actin. Interacts with NEB. Interacts with MYH9. Interacts with MYLK. Interacts with TASOR. In terms of assembly, interacts with TRIP6. Interacts with DYNLT1. Interacts with KIF14; at midbody during cytokinesis. As to expression, expressed in the heart, tongue and granular cells within the cerebellum.

It localises to the cell membrane. Its subcellular location is the cytoplasm. It is found in the cytoskeleton. The protein resides in the cell projection. The protein localises to the invadopodium. It localises to the podosome. Its subcellular location is the midbody. It is found in the cleavage furrow. Forms a high-affinity link between the actin cytoskeleton and the membrane. Is among the first costameric proteins to assemble during myogenesis and it contributes to myogenic membrane structure and differentiation. Appears to be involved in myosin II assembly. May modulate myosin II regulation through MLCK during cell spreading, an initial step in cell migration. May play a role in invadopodial function. Functionally, may be involved in modulation of focal adhesions. Supervillin-mediated down-regulation of focal adhesions involves binding to TRIP6. Plays a role in cytokinesis through KIF14 interaction. The sequence is that of Supervillin (Svil) from Mus musculus (Mouse).